Consider the following 197-residue polypeptide: uncharacterized protein (197 aa).

The segment at 1-135 is disordered; the sequence is MKTPWKFLAR…ERGKRANARV (135 aa). Residues 14–32 are compositionally biased toward polar residues; it reads RQPSGKTQESSAGNDTGSK. A compositionally biased stretch (basic and acidic residues) spans 83–96; it reads IHADEAQTTARDEA. Over residues 116-132 the composition is skewed to basic residues; sequence SQRKPRIKRRERGKRAN.

The protein to Rhizobium NGR234A y4nF and y4aO.

This is an uncharacterized protein from Rhizobium meliloti (strain 1021) (Ensifer meliloti).